The following is a 950-amino-acid chain: A disintegrin and metalloproteinase with thrombospondin motifs 15 (950 aa).

The signal sequence occupies residues 1–18 (MLLLGISILALAWRPAGS). A propeptide spanning residues 19 to 212 (SEPEWEVVVP…NRRRSGRAKR (194 aa)) is cleaved from the precursor. Asn-141 is a glycosylation site (N-linked (GlcNAc...) asparagine). Residues 144-172 (APEAQRHSQGAHLLQRRGAPVGPSGDPTS) form a disordered region. Positions 172–179 (SRCGVASG) match the Cysteine switch motif. Cys-174 provides a ligand contact to Zn(2+). The 210-residue stretch at 218-427 (RYVETLVVAD…GHGDCLLDQP (210 aa)) folds into the Peptidase M12B domain. 11 disulfides stabilise this stretch: Cys-293/Cys-345, Cys-322/Cys-327, Cys-339/Cys-422, Cys-377/Cys-406, Cys-448/Cys-470, Cys-459/Cys-480, Cys-465/Cys-499, Cys-493/Cys-504, Cys-528/Cys-565, Cys-532/Cys-570, and Cys-543/Cys-555. His-361 is a binding site for Zn(2+). Glu-362 is a catalytic residue. Zn(2+)-binding residues include His-365 and His-371. The region spanning 428–515 (SKPITLPEDL…ERHNPNKYRV (88 aa)) is the Disintegrin domain. A TSP type-1 1 domain is found at 516-571 (DGSWAKWEPYGSCSRTCGGGVQLARRQCSNPTPANGGKYCEGVRVKYRSCNLEPCP). N-linked (GlcNAc...) asparagine glycans are attached at residues Asn-591, Asn-623, and Asn-679. Positions 701–838 (AIPAGASSID…SNQVEQPDNR (138 aa)) are spacer. Positions 798–822 (FYLPKEPREDKSTRPKDPRGSPVLR) are disordered. Residues 802-816 (KEPREDKSTRPKDPR) are compositionally biased toward basic and acidic residues. TSP type-1 domains lie at 839–895 (PPAR…EPCP) and 896–949 (TWEL…VLRP).

Requires Zn(2+) as cofactor. Post-translationally, the precursor is cleaved by a furin endopeptidase. Glycosylated. Can be O-fucosylated by POFUT2 on a serine or a threonine residue found within the consensus sequence C1-X(2)-(S/T)-C2-G of the TSP type-1 repeat domains where C1 and C2 are the first and second cysteine residue of the repeat, respectively. Fucosylated repeats can then be further glycosylated by the addition of a beta-1,3-glucose residue by the glucosyltransferase, B3GALTL. Fucosylation mediates the efficient secretion of ADAMTS family members. Can be C-glycosylated with one or two mannose molecules on tryptophan residues within the consensus sequence W-X-X-W of the TPRs. Also N-glycosylated. These other glycosylations can also facilitate secretion. In terms of tissue distribution, in the adult colon, highly expressed in the muscularis externa (inner circular smooth muscle and outer longitudinal smooth muscle), muscularis mucosa, submucosal glands, crypt, villi epithelial cells, goblet cells and lamina propria. Expressed at perimuscular and peritendious areas in the developing limbs.

The protein localises to the secreted. Its subcellular location is the extracellular space. It is found in the extracellular matrix. The protein resides in the cell surface. In terms of biological role, metalloprotease which has proteolytic activity against the proteoglycan VCAN, cleaving it at the 'Glu-1401-|-1402-Ala' site. Cleaves VCAN in the pericellular matrix surrounding myoblasts, facilitating myoblast contact and fusion which is required for skeletal muscle development and regeneration. The polypeptide is A disintegrin and metalloproteinase with thrombospondin motifs 15 (Adamts15) (Mus musculus (Mouse)).